Reading from the N-terminus, the 317-residue chain is Membrane-associated protein VIPP1, chloroplastic (317 aa).

Residues 92-246 are a coiled coil; the sequence is EMNDDLTKMR…SQAEALGQLA (155 aa). Residues 265 to 317 form a disordered region; that stretch reads DLAQMKKEISGSSSKGELPPGRTAVSNSGAARPFRDIEIENELNELRKKANEY. The segment covering 297-317 has biased composition (basic and acidic residues); sequence PFRDIEIENELNELRKKANEY.

It belongs to the PspA/Vipp/IM30 family. In terms of assembly, homomultimer. Complex formation involves interaction via the central alpha-helical domain (71-286). (Microbial infection) Interacts with the rice tungro bacilliform virus (RTBV) capsid protein.

The protein resides in the plastid. Its subcellular location is the chloroplast inner membrane. The protein localises to the chloroplast thylakoid membrane. Its function is as follows. Required for plastid vesicle formation and thylakoid membrane biogenesis, but not for functional assembly of thylakoid protein complexes. In Oryza sativa subsp. japonica (Rice), this protein is Membrane-associated protein VIPP1, chloroplastic.